The following is a 622-amino-acid chain: Histone-lysine N-methyltransferase set9 (622 aa).

The region spanning 120–234 is the SET domain; that stretch reads SPFEITTTNR…IGEEITVSYG (115 aa). Disordered regions lie at residues 262–314, 335–394, 427–470, and 576–622; these read VPSE…GKFV, QPAG…TTAT, PTTS…RGKP, and DRGV…RMTM. The span at 265 to 285 shows a compositional bias: polar residues; the sequence is EPQSKASTPALNDDTLSTDSH. Positions 376-394 are enriched in low complexity; sequence PPSTAANESERSSTSTTAT. 2 stretches are compositionally biased toward polar residues: residues 427 to 437 and 446 to 458; these read PTTSLRSGSTE and DQPS…SIGS. The segment covering 590-607 has biased composition (basic and acidic residues); sequence SEPRTETEGSEGCEDRRT. Residues 608–622 are compositionally biased toward basic residues; sequence TRASRRRTRSLRMTM.

This sequence belongs to the class V-like SAM-binding methyltransferase superfamily. Histone-lysine methyltransferase family. Suvar4-20 subfamily.

It localises to the nucleus. It is found in the chromosome. The catalysed reaction is L-lysyl(20)-[histone H4] + 3 S-adenosyl-L-methionine = N(6),N(6),N(6)-trimethyl-L-lysyl(20)-[histone H4] + 3 S-adenosyl-L-homocysteine + 3 H(+). Histone methyltransferase that trimethylates 'Lys-20' of histone H4 to form H4K20me3. This Aspergillus fumigatus (strain ATCC MYA-4609 / CBS 101355 / FGSC A1100 / Af293) (Neosartorya fumigata) protein is Histone-lysine N-methyltransferase set9 (set9).